The primary structure comprises 232 residues: Phosphatidylserine decarboxylase proenzyme (232 aa).

Ser-190 (schiff-base intermediate with substrate; via pyruvic acid) is an active-site residue. A Pyruvic acid (Ser); by autocatalysis modification is found at Ser-190.

This sequence belongs to the phosphatidylserine decarboxylase family. PSD-A subfamily. Heterodimer of a large membrane-associated beta subunit and a small pyruvoyl-containing alpha subunit. Pyruvate is required as a cofactor. Is synthesized initially as an inactive proenzyme. Formation of the active enzyme involves a self-maturation process in which the active site pyruvoyl group is generated from an internal serine residue via an autocatalytic post-translational modification. Two non-identical subunits are generated from the proenzyme in this reaction, and the pyruvate is formed at the N-terminus of the alpha chain, which is derived from the carboxyl end of the proenzyme. The post-translation cleavage follows an unusual pathway, termed non-hydrolytic serinolysis, in which the side chain hydroxyl group of the serine supplies its oxygen atom to form the C-terminus of the beta chain, while the remainder of the serine residue undergoes an oxidative deamination to produce ammonia and the pyruvoyl prosthetic group on the alpha chain.

Its subcellular location is the cell membrane. It carries out the reaction a 1,2-diacyl-sn-glycero-3-phospho-L-serine + H(+) = a 1,2-diacyl-sn-glycero-3-phosphoethanolamine + CO2. Its pathway is phospholipid metabolism; phosphatidylethanolamine biosynthesis; phosphatidylethanolamine from CDP-diacylglycerol: step 2/2. Its function is as follows. Catalyzes the formation of phosphatidylethanolamine (PtdEtn) from phosphatidylserine (PtdSer). Important for establishment of root nodule symbiosis with the host plant. This is Phosphatidylserine decarboxylase proenzyme from Rhizobium meliloti (strain 1021) (Ensifer meliloti).